The primary structure comprises 293 residues: Homoserine kinase (293 aa).

84 to 94 lines the ATP pocket; sequence PFSRGLGSSSS.

It belongs to the GHMP kinase family. Homoserine kinase subfamily.

It localises to the cytoplasm. It carries out the reaction L-homoserine + ATP = O-phospho-L-homoserine + ADP + H(+). Its pathway is amino-acid biosynthesis; L-threonine biosynthesis; L-threonine from L-aspartate: step 4/5. Its function is as follows. Catalyzes the ATP-dependent phosphorylation of L-homoserine to L-homoserine phosphate. This Campylobacter fetus subsp. fetus (strain 82-40) protein is Homoserine kinase.